The chain runs to 122 residues: Large ribosomal subunit protein bL19 (122 aa).

The protein belongs to the bacterial ribosomal protein bL19 family.

In terms of biological role, this protein is located at the 30S-50S ribosomal subunit interface and may play a role in the structure and function of the aminoacyl-tRNA binding site. The polypeptide is Large ribosomal subunit protein bL19 (rplS) (Synechocystis sp. (strain ATCC 27184 / PCC 6803 / Kazusa)).